The primary structure comprises 196 residues: Glycerol-3-phosphate acyltransferase (196 aa).

Transmembrane regions (helical) follow at residues 1 to 21, 53 to 73, 78 to 98, 112 to 132, and 152 to 172; these read MIIL…GYLT, AITA…GSLL, GALV…FLKF, IMTS…VMLI, and LLFG…VMIF.

This sequence belongs to the PlsY family. In terms of assembly, probably interacts with PlsX.

It is found in the cell membrane. It carries out the reaction an acyl phosphate + sn-glycerol 3-phosphate = a 1-acyl-sn-glycero-3-phosphate + phosphate. It participates in lipid metabolism; phospholipid metabolism. In terms of biological role, catalyzes the transfer of an acyl group from acyl-phosphate (acyl-PO(4)) to glycerol-3-phosphate (G3P) to form lysophosphatidic acid (LPA). This enzyme utilizes acyl-phosphate as fatty acyl donor, but not acyl-CoA or acyl-ACP. In Carboxydothermus hydrogenoformans (strain ATCC BAA-161 / DSM 6008 / Z-2901), this protein is Glycerol-3-phosphate acyltransferase.